Consider the following 244-residue polypeptide: 7-cyano-7-deazaguanine synthase (244 aa).

Residue 14–24 coordinates ATP; it reads FSGGQDSATCV. Zn(2+) contacts are provided by cysteine 202, cysteine 217, cysteine 220, and cysteine 223.

The protein belongs to the QueC family. Zn(2+) is required as a cofactor.

The enzyme catalyses 7-carboxy-7-deazaguanine + NH4(+) + ATP = 7-cyano-7-deazaguanine + ADP + phosphate + H2O + H(+). The protein operates within purine metabolism; 7-cyano-7-deazaguanine biosynthesis. Catalyzes the ATP-dependent conversion of 7-carboxy-7-deazaguanine (CDG) to 7-cyano-7-deazaguanine (preQ(0)). This chain is 7-cyano-7-deazaguanine synthase, found in Burkholderia vietnamiensis (strain G4 / LMG 22486) (Burkholderia cepacia (strain R1808)).